A 522-amino-acid polypeptide reads, in one-letter code: Putative ribose/galactose/methyl galactoside import ATP-binding protein (522 aa).

ABC transporter domains lie at 7–244 (LEMV…VGRE) and 254–498 (PKLG…TGQA). 39 to 46 (GENGAGKS) provides a ligand contact to ATP.

Belongs to the ABC transporter superfamily. Carbohydrate importer 2 (CUT2) (TC 3.A.1.2) family.

It is found in the cell membrane. It catalyses the reaction D-ribose(out) + ATP + H2O = D-ribose(in) + ADP + phosphate + H(+). The catalysed reaction is D-galactose(out) + ATP + H2O = D-galactose(in) + ADP + phosphate + H(+). Part of an ABC transporter complex involved in carbohydrate import. Could be involved in ribose, galactose and/or methyl galactoside import. Responsible for energy coupling to the transport system. The protein is Putative ribose/galactose/methyl galactoside import ATP-binding protein of Halalkalibacterium halodurans (strain ATCC BAA-125 / DSM 18197 / FERM 7344 / JCM 9153 / C-125) (Bacillus halodurans).